The sequence spans 443 residues: ATP-dependent protease ATPase subunit HslU (443 aa).

ATP contacts are provided by residues valine 18 and 60–65 (GVGKTE). Residues 139-160 (AKNNWGQPEESGEPSSARQNFR) form a disordered region. Positions 256, 321, and 393 each coordinate ATP.

The protein belongs to the ClpX chaperone family. HslU subfamily. A double ring-shaped homohexamer of HslV is capped on each side by a ring-shaped HslU homohexamer. The assembly of the HslU/HslV complex is dependent on binding of ATP.

The protein localises to the cytoplasm. In terms of biological role, ATPase subunit of a proteasome-like degradation complex; this subunit has chaperone activity. The binding of ATP and its subsequent hydrolysis by HslU are essential for unfolding of protein substrates subsequently hydrolyzed by HslV. HslU recognizes the N-terminal part of its protein substrates and unfolds these before they are guided to HslV for hydrolysis. The polypeptide is ATP-dependent protease ATPase subunit HslU (Sodalis glossinidius (strain morsitans)).